The primary structure comprises 1331 residues: Xanthine dehydrogenase/oxidase (1331 aa).

The 2Fe-2S ferredoxin-type domain occupies 4 to 91 (DELVFFVNGK…HVAVTTVEGI (88 aa)). Positions 43, 48, 51, 73, 112, 115, 147, and 149 each coordinate [2Fe-2S] cluster. Residues 228 to 413 (FEGERVTWIQ…LSIEIPYSKE (186 aa)) form the FAD-binding PCMH-type domain. Residues 256–263 (LVVGNTEI), F336, 346–350 (SIGGN), D359, L403, and K421 contribute to the FAD site. A disulfide bridge links C535 with C992. Positions 767 and 798 each coordinate Mo-molybdopterin. Substrate is bound by residues E802 and R880. R912 contacts Mo-molybdopterin. Substrate is bound by residues F914 and T1010. Residue A1079 participates in Mo-molybdopterin binding. E1261 acts as the Proton acceptor in catalysis.

This sequence belongs to the xanthine dehydrogenase family. In terms of assembly, homodimer. Interacts with BTN1A1. [2Fe-2S] cluster is required as a cofactor. Requires FAD as cofactor. Mo-molybdopterin serves as cofactor. In terms of processing, subject to partial proteolysis; this alters the enzyme from the dehydrogenase form (D) to the oxidase form (O). Post-translationally, contains sulfhydryl groups that are easily oxidized (in vitro); this alters the enzyme from the dehydrogenase form (D) to the oxidase form (O).

It localises to the peroxisome. The protein localises to the cytoplasm. It is found in the secreted. The catalysed reaction is xanthine + NAD(+) + H2O = urate + NADH + H(+). It catalyses the reaction hypoxanthine + NAD(+) + H2O = xanthine + NADH + H(+). It carries out the reaction xanthine + O2 + H2O = urate + H2O2. Can be converted from the dehydrogenase form (D) to the oxidase form (O) irreversibly by proteolysis or reversibly through the oxidation of sulfhydryl groups. Key enzyme in purine degradation. Catalyzes the oxidation of hypoxanthine to xanthine. Catalyzes the oxidation of xanthine to uric acid. Contributes to the generation of reactive oxygen species. The protein is Xanthine dehydrogenase/oxidase (Xdh) of Rattus norvegicus (Rat).